A 135-amino-acid polypeptide reads, in one-letter code: Thioredoxin H5 (135 aa).

A Thioredoxin domain is found at 13 to 128; the sequence is EHLDYSGGNV…LQEKFEQLNR (116 aa). Active-site nucleophile residues include Cys54 and Cys57. Cys54 and Cys57 are oxidised to a cystine.

The protein belongs to the thioredoxin family. Plant H-type subfamily.

The protein resides in the cytoplasm. Its function is as follows. Probable thiol-disulfide oxidoreductase that may be involved in the redox regulation of a number of cytosolic enzymes. The polypeptide is Thioredoxin H5 (Oryza sativa subsp. japonica (Rice)).